Reading from the N-terminus, the 423-residue chain is Histidine--tRNA ligase (423 aa).

This sequence belongs to the class-II aminoacyl-tRNA synthetase family. In terms of assembly, homodimer.

Its subcellular location is the cytoplasm. The catalysed reaction is tRNA(His) + L-histidine + ATP = L-histidyl-tRNA(His) + AMP + diphosphate + H(+). The chain is Histidine--tRNA ligase from Actinobacillus succinogenes (strain ATCC 55618 / DSM 22257 / CCUG 43843 / 130Z).